Reading from the N-terminus, the 389-residue chain is MEKAIRNFLSQESAGGILLLVAVALAMLMANSPLAGLYQGFLGTEVQVRVGALDLHKPLLLWINDGLMALFFLLIGLEVKRELLEGALSSVAQASLPTFAAIGGMLVPAGIYLLFNYGDPVTQAGWAIPAATDIAFALGIMALLGSRVPVALKVFLLALAIIDDLGVIVIIALFYSTDLSTISLIIASIAIVGLVALNRKGVTALAPYGVLGLVLWVAVLKSGVHATLAGVIIAFCIPLRAKDGSSPSEHLEHSLHPWSTFLILPVFAFANAGVALGNMSLNTLISPVPVGIALGLMLGKPIGVMLFSYAAVKLRLAQLPNGIGWKQIAPVAAMCGIGFTMSMFIASLAFEQADPMYGDLARLGTLIGSIIAALIGYFWLSKVLPKQGV.

A run of 11 helical transmembrane segments spans residues 17 to 37, 59 to 79, 95 to 115, 124 to 144, 154 to 174, 177 to 197, 213 to 233, 261 to 281, 287 to 307, 328 to 348, and 363 to 383; these read ILLLVAVALAMLMANSPLAGL, LLLWINDGLMALFFLLIGLEV, SLPTFAAIGGMLVPAGIYLLF, AGWAIPAATDIAFALGIMALL, VFLLALAIIDDLGVIVIIALF, TDLSTISLIIASIAIVGLVAL, LVLWVAVLKSGVHATLAGVII, FLILPVFAFANAGVALGNMSL, PVPVGIALGLMLGKPIGVMLF, IAPVAAMCGIGFTMSMFIASL, and LGTLIGSIIAALIGYFWLSKV.

The protein belongs to the NhaA Na(+)/H(+) (TC 2.A.33) antiporter family.

Its subcellular location is the cell inner membrane. The enzyme catalyses Na(+)(in) + 2 H(+)(out) = Na(+)(out) + 2 H(+)(in). Na(+)/H(+) antiporter that extrudes sodium in exchange for external protons. This Shewanella sp. (strain MR-7) protein is Na(+)/H(+) antiporter NhaA.